Consider the following 448-residue polypeptide: Divalent metal cation transporter MntH (448 aa).

The segment covering 1–10 has biased composition (basic and acidic residues); that stretch reads MKKDKTERTK. Residues 1-20 form a disordered region; it reads MKKDKTERTKQSWRKAQNAP. 11 consecutive transmembrane segments (helical) span residues 41 to 61, 69 to 89, 117 to 137, 147 to 167, 176 to 196, 215 to 235, 270 to 290, 307 to 327, 363 to 383, 384 to 404, and 424 to 444; these read LFAF…PGNW, SEFG…AVLL, GFVL…AEVI, FGIP…LVLF, IEVI…AEMV, IVTN…TVMP, FSLT…AAAF, LLNP…ALLA, VLAI…GINE, LLIF…IPLV, and IISW…LFYT.

It belongs to the NRAMP family.

Its subcellular location is the cell membrane. Functionally, h(+)-stimulated, divalent metal cation uptake system. In Listeria monocytogenes serotype 4b (strain CLIP80459), this protein is Divalent metal cation transporter MntH.